Consider the following 367-residue polypeptide: MKLLTALSELISIFLFTTIFIFLARKVAIKIGLVDKPNFRKRHQGVIPLVGGISVFAGICFMFGLSDYYIPHLSLYLICAGVLVFVGAMDDRFDISVKIRAVVQAVIAVVMMVIAKLHLGSLGYIFGPWELVLGPFGYFLTLFAVWAAINAFNMVDGIDGLLGGLSSVSFAAMGLILWFDGQTSLAMWCFAMIAAILPYIMLNLGILGRRYKVFMGDAGSTLIGFTVIWLLLETTQGKTHSISPVTALWIIAIPLMDMVAIMYRRLRKGMSPFSPDRQHIHHLVMRAGFTSRQAFVLITLAAAILAGVGVTAEYSHFVPEWVMLVLFLLAFFLYGYCIKRAWKVARFIKRVKRRLRRQRENRPNLTK.

The next 9 membrane-spanning stretches (helical) occupy residues 3 to 23 (LLTALSELISIFLFTTIFIFL), 45 to 65 (GVIPLVGGISVFAGICFMFGL), 69 to 89 (YIPHLSLYLICAGVLVFVGAM), 129 to 149 (WELVLGPFGYFLTLFAVWAAI), 158 to 178 (IDGLLGGLSSVSFAAMGLILW), 187 to 207 (MWCFAMIAAILPYIMLNLGIL), 213 to 233 (VFMGDAGSTLIGFTVIWLLLE), 242 to 262 (ISPVTALWIIAIPLMDMVAIM), and 318 to 338 (VPEWVMLVLFLLAFFLYGYCI).

It belongs to the glycosyltransferase 4 family. WecA subfamily. It depends on Mg(2+) as a cofactor. Mn(2+) serves as cofactor.

It localises to the cell inner membrane. The catalysed reaction is di-trans,octa-cis-undecaprenyl phosphate + UDP-N-acetyl-alpha-D-glucosamine = N-acetyl-alpha-D-glucosaminyl-di-trans,octa-cis-undecaprenyl diphosphate + UMP. The protein operates within bacterial outer membrane biogenesis; LPS O-antigen biosynthesis. It functions in the pathway bacterial outer membrane biogenesis; enterobacterial common antigen biosynthesis. Inhibited by tunicamycin. Its function is as follows. Catalyzes the transfer of the GlcNAc-1-phosphate moiety from UDP-GlcNAc onto the carrier lipid undecaprenyl phosphate (C55-P), yielding GlcNAc-pyrophosphoryl-undecaprenyl (GlcNAc-PP-C55). In Salmonella typhimurium (strain LT2 / SGSC1412 / ATCC 700720), this protein is Undecaprenyl-phosphate alpha-N-acetylglucosaminyl 1-phosphate transferase.